A 488-amino-acid polypeptide reads, in one-letter code: Cobyric acid synthase (488 aa).

In terms of domain architecture, GATase cobBQ-type spans 254–442 (KFKIVVPVLP…VHGLFGMDTQ (189 aa)). Catalysis depends on cysteine 336, which acts as the Nucleophile. Residue histidine 434 is part of the active site.

Belongs to the CobB/CobQ family. CobQ subfamily.

Its pathway is cofactor biosynthesis; adenosylcobalamin biosynthesis. Functionally, catalyzes amidations at positions B, D, E, and G on adenosylcobyrinic A,C-diamide. NH(2) groups are provided by glutamine, and one molecule of ATP is hydrogenolyzed for each amidation. The sequence is that of Cobyric acid synthase from Beijerinckia indica subsp. indica (strain ATCC 9039 / DSM 1715 / NCIMB 8712).